Here is a 57-residue protein sequence, read N- to C-terminus: Ribulose bisphosphate carboxylase large chain (57 aa).

The propeptide occupies 1–2; it reads MS. Proline 3 carries the N-acetylproline modification. Position 14 is an N6,N6,N6-trimethyllysine (lysine 14).

The protein belongs to the RuBisCO large chain family. Type I subfamily. Heterohexadecamer of 8 large chains and 8 small chains.

It localises to the plastid. The protein localises to the chloroplast. It catalyses the reaction 2 (2R)-3-phosphoglycerate + 2 H(+) = D-ribulose 1,5-bisphosphate + CO2 + H2O. It carries out the reaction D-ribulose 1,5-bisphosphate + O2 = 2-phosphoglycolate + (2R)-3-phosphoglycerate + 2 H(+). Its function is as follows. RuBisCO catalyzes two reactions: the carboxylation of D-ribulose 1,5-bisphosphate, the primary event in carbon dioxide fixation, as well as the oxidative fragmentation of the pentose substrate in the photorespiration process. Both reactions occur simultaneously and in competition at the same active site. The chain is Ribulose bisphosphate carboxylase large chain (rbcL) from Camellia sinensis (Tea plant).